We begin with the raw amino-acid sequence, 329 residues long: Malate dehydrogenase (329 aa).

NAD(+) is bound at residue 12–18 (GAAGQIG). 2 residues coordinate substrate: Arg95 and Arg101. Residues Asn108, Gln115, and 132–134 (VGN) each bind NAD(+). Residues Asn134 and Arg165 each contribute to the substrate site. His190 functions as the Proton acceptor in the catalytic mechanism.

Belongs to the LDH/MDH superfamily. MDH type 2 family.

It catalyses the reaction (S)-malate + NAD(+) = oxaloacetate + NADH + H(+). In terms of biological role, catalyzes the reversible oxidation of malate to oxaloacetate. This Bordetella avium (strain 197N) protein is Malate dehydrogenase.